A 231-amino-acid polypeptide reads, in one-letter code: Acyl-protein thioesterase 1 (231 aa).

Residues Ser-121, Asp-178, and His-211 each act as charge relay system in the active site.

It belongs to the AB hydrolase superfamily. AB hydrolase 2 family.

It is found in the cytoplasm. The protein localises to the nucleus. It carries out the reaction S-hexadecanoyl-L-cysteinyl-[protein] + H2O = L-cysteinyl-[protein] + hexadecanoate + H(+). In terms of biological role, hydrolyzes fatty acids from S-acylated cysteine residues in proteins with a strong preference for palmitoylated G-alpha proteins over other acyl substrates. Mediates the deacylation of G-alpha proteins such as GPA1 in vivo, but has weak or no activity toward palmitoylated Ras proteins. Has weak lysophospholipase activity in vitro; however such activity may not exist in vivo. The polypeptide is Acyl-protein thioesterase 1 (Candida albicans (strain SC5314 / ATCC MYA-2876) (Yeast)).